Reading from the N-terminus, the 68-residue chain is uncharacterized protein (68 aa).

The signal sequence occupies residues M1–S28.

This is an uncharacterized protein from Escherichia coli (strain K12).